The primary structure comprises 837 residues: Striatin-interacting protein 1 (837 aa).

Residue M1 is modified to N-acetylmethionine. Disordered stretches follow at residues 1 to 67 (MEPA…ESPD) and 333 to 423 (AASP…KGLP). Residues 18–35 (PQPPPPPPPATAQPPPGA) show a composition bias toward pro residues. The segment covering 36–46 (PRAAAGLLPGG) has biased composition (low complexity). Positions 47 to 60 (KAREFNRNQRKDSE) are enriched in basic and acidic residues. A phosphoserine mark is found at S59, S335, and S339. Over residues 333–343 (AASPPASASDS) the composition is skewed to low complexity. The segment covering 356-377 (KALIKQDNLDAFNERDPYKADD) has biased composition (basic and acidic residues). Residues 378-391 (SREEEEENDDDNSL) show a composition bias toward acidic residues. A Phosphoserine modification is found at S788. Positions 796–837 (DNCLQSVLGQRVDLPEDFQMNYDLWLEREVFSKPISWEELLQ) are required for STRIPAK core complex formation.

It belongs to the STRIP family. Part of the core of STRIPAK complexes composed of PP2A catalytic and scaffolding subunits, the striatins (PP2A regulatory subunits), the striatin-associated proteins MOB4, STRIP1 and STRIP2, PDCD10 and members of the STE20 kinases, such as STK24 and STK26. The STRIPAK complex can be extended by adapter proteins such as SLMAP:SIKE1, CTTNBP2 or CTTNBP2NL. Interacts with CDC42BPB. Interacts with CTTNBP2NL.

It localises to the cytoplasm. Plays a role in the regulation of cell morphology and cytoskeletal organization. Required in the cortical actin filament dynamics and cell shape. Part of the striatin-interacting phosphatase and kinase (STRIPAK) complexes. STRIPAK complexes have critical roles in protein (de)phosphorylation and are regulators of multiple signaling pathways including Hippo, MAPK, nuclear receptor and cytoskeleton remodeling. Different types of STRIPAK complexes are involved in a variety of biological processes such as cell growth, differentiation, apoptosis, metabolism and immune regulation. The polypeptide is Striatin-interacting protein 1 (STRIP1) (Pongo abelii (Sumatran orangutan)).